The sequence spans 81 residues: Sulfur carrier protein TusA (81 aa).

The Cysteine persulfide intermediate role is filled by cysteine 19.

This sequence belongs to the sulfur carrier protein TusA family.

Its subcellular location is the cytoplasm. In terms of biological role, sulfur carrier protein which probably makes part of a sulfur-relay system. The protein is Sulfur carrier protein TusA of Shewanella sp. (strain ANA-3).